The chain runs to 431 residues: Keratin, type I cytoskeletal 40 (431 aa).

Positions 1–89 (MASDCSPTGC…CEDGVFNSNE (89 aa)) are head. Residues 89–400 (EKETMQFLND…GLLDSEDSRL (312 aa)) form the IF rod domain. Positions 90–124 (KETMQFLNDRLASYLEKVRGLEELNAELECRIREQ) are coil 1A. The segment at 125 to 135 (CEEDVPLVCPD) is linker 1. The coil 1B stretch occupies residues 136-236 (YQCYFDTIED…HEEEVNVLRG (101 aa)). Positions 237 to 252 (QLGDRLSVELDTAPTT) are linker 12. The coil 2 stretch occupies residues 253 to 396 (DLNRVLDEMR…NTYQGLLDSE (144 aa)). A tail region spans residues 397–431 (DSRLPCNPCSATSMSNDTCEPCSAYVICTVENSCP).

The protein belongs to the intermediate filament family. As to quaternary structure, heterotetramer of two type I and two type II keratins.

May play a role in late hair differentiation. The chain is Keratin, type I cytoskeletal 40 (KRT40) from Bos taurus (Bovine).